Here is a 201-residue protein sequence, read N- to C-terminus: Recombination protein RecR (201 aa).

A C4-type zinc finger spans residues 57-72 (CADCRTFTEQDVCNIC). One can recognise a Toprim domain in the interval 81–176 (GQICVVESPA…SASRIAHGVP (96 aa)).

This sequence belongs to the RecR family.

May play a role in DNA repair. It seems to be involved in an RecBC-independent recombinational process of DNA repair. It may act with RecF and RecO. The protein is Recombination protein RecR of Enterobacter sp. (strain 638).